Reading from the N-terminus, the 132-residue chain is DNA-directed RNA polymerase subunit omega (132 aa).

It belongs to the RNA polymerase subunit omega family. In terms of assembly, the RNAP catalytic core consists of 2 alpha, 1 beta, 1 beta' and 1 omega subunit. When a sigma factor is associated with the core the holoenzyme is formed, which can initiate transcription.

The catalysed reaction is RNA(n) + a ribonucleoside 5'-triphosphate = RNA(n+1) + diphosphate. Promotes RNA polymerase assembly. Latches the N- and C-terminal regions of the beta' subunit thereby facilitating its interaction with the beta and alpha subunits. The sequence is that of DNA-directed RNA polymerase subunit omega from Bartonella quintana (strain Toulouse) (Rochalimaea quintana).